Here is a 614-residue protein sequence, read N- to C-terminus: MIKKASLLTACSVTAFSAWAQDTSPDTLVVTANRFEQPRSTVLAPTTVVTRQDIDRWQSTSVNDVLRRLPGVDITQNGGSGQLSSIFIRGTNASHVLVLIDGVRLNLAGGSGSADLSQFPIALVQRVEYIRGPRSAVYGSDAIGGVVNIITTRDEPGTEISAGWGSNSYQNYDVSTQQQLGDKTRVTLLGDYAHTHGYDVVAYGNTGTQAQPDNDGFLSKTLYGALEHNFTDAWSGFVRGYGYDNRTNYDAYYSPGSPLVDTRKLYSQSWDAGLRYNGELIKSQLITSYSHSKDYNYDPHYGRYDSSATLDEMKQYTVQWANNIIIGHGNVGAGVDWQKQSTAPGTAYVKDGYDQRNTGIYLTGLQQVGDFTFEGAARSDDNSQFGRHGTWQTSAGWEFIEGYRFIASYGTSYKAPNLGQLYGFYGNPNLDPEKSKQWEGAFEGLTAGVNWRISGYRNDVSDLIDYDDHTLKYYNEGKARIKGVEATANFDTGPLTHTVSYDYVDARNAITDTPLLRRAKQQVKYQLDWQLYDFDWGITYQYLGTRYDKDYSSYPYQTVKMGGVSLWDLAVAYPVTSHLTVRGKIANLFDKDYETVYGYQTAGREYTLSGSYTF.

Residues 1–20 form the signal peptide; that stretch reads MIKKASLLTACSVTAFSAWA. The short motif at 26–33 is the TonB box element; that stretch reads DTLVVTAN. One can recognise a TBDR plug domain in the interval 38–152; it reads PRSTVLAPTT…IGGVVNIITT (115 aa). Cyanocob(III)alamin-binding positions include Leu-83, Ser-85, Asn-92, and 110–111; that span reads GS. Residues 155 to 614 form the TBDR beta-barrel domain; sequence EPGTEISAGW…EYTLSGSYTF (460 aa). 3 beta stranded membrane-spanning segments follow: residues 158–165, 169–178, and 184–195; these read TEISAGWG, YQNYDVSTQQ, and TRVTLLGDYAHT. Asp-199, Gln-211, Asp-213, and Asp-215 together coordinate Ca(2+). The next 2 beta stranded transmembrane spans lie at 217 to 227 and 232 to 248; these read FLSKTLYGALE and DAWSGFVRGYGYDNRTN. Ca(2+) contacts are provided by Tyr-249 and Asp-250. Position 251 (Ala-251) interacts with cyanocob(III)alamin. Position 261 (Asp-261) interacts with Ca(2+). Beta stranded transmembrane passes span 263 to 277, 279 to 296, 309 to 325, 328 to 337, 353 to 369, 371 to 381, 385 to 400, 403 to 417, 434 to 443, 449 to 458, 473 to 490, 494 to 509, 517 to 529, and 535 to 550; these read RKLYSQSWDAGLRYN, ELIKSQLITSYSHSKDYN, TLDEMKQYTVQWANNII, HGNVGAGVDW, YDQRNTGIYLTGLQQVG, FTFEGAARSDD, FGRHGTWQTSAGWEFI, YRFIASYGTSYKAPN, KSKQWEGAFE, VNWRISGYRN, YYNEGKARIKGVEATANF, PLTHTVSYDYVDARNA, RRAKQQVKYQLDW, and DWGITYQYLGTRYDKD. Thr-309 contacts cyanocob(III)alamin. Arg-517 lines the cyanocob(III)alamin pocket. Position 551 (Tyr-551) interacts with cyanocob(III)alamin. 3 consecutive transmembrane segments (beta stranded) span residues 558–572, 585–596, and 602–614; these read TVKMGGVSLWDLAVA, IANLFDKDYETV, and AGREYTLSGSYTF. Positions 597 to 614 match the TonB C-terminal box motif; that stretch reads YGYQTAGREYTLSGSYTF.

Belongs to the TonB-dependent receptor family. BtuB (TC 1.B.14.3.1) subfamily.

The protein localises to the cell outer membrane. Involved in the active translocation of vitamin B12 (cyanocobalamin) across the outer membrane to the periplasmic space. It derives its energy for transport by interacting with the trans-periplasmic membrane protein TonB. This Escherichia coli O157:H7 protein is Vitamin B12 transporter BtuB.